The sequence spans 517 residues: Bifunctional purine biosynthesis protein PurH (517 aa).

The MGS-like domain maps to 1–145 (MSPLALVSVS…KNHKDVSVLV (145 aa)).

Belongs to the PurH family.

The enzyme catalyses (6R)-10-formyltetrahydrofolate + 5-amino-1-(5-phospho-beta-D-ribosyl)imidazole-4-carboxamide = 5-formamido-1-(5-phospho-D-ribosyl)imidazole-4-carboxamide + (6S)-5,6,7,8-tetrahydrofolate. The catalysed reaction is IMP + H2O = 5-formamido-1-(5-phospho-D-ribosyl)imidazole-4-carboxamide. It functions in the pathway purine metabolism; IMP biosynthesis via de novo pathway; 5-formamido-1-(5-phospho-D-ribosyl)imidazole-4-carboxamide from 5-amino-1-(5-phospho-D-ribosyl)imidazole-4-carboxamide (10-formyl THF route): step 1/1. It participates in purine metabolism; IMP biosynthesis via de novo pathway; IMP from 5-formamido-1-(5-phospho-D-ribosyl)imidazole-4-carboxamide: step 1/1. In Prochlorococcus marinus subsp. pastoris (strain CCMP1986 / NIES-2087 / MED4), this protein is Bifunctional purine biosynthesis protein PurH.